The sequence spans 423 residues: Divalent metal cation transporter MntH (423 aa).

The next 11 membrane-spanning stretches (helical) occupy residues 31–51, 58–78, 116–136, 137–157, 168–188, 213–233, 254–274, 302–322, 342–362, 363–383, and 401–421; these read LMMLGPAFIAAIGYIDPGNFA, SSFGYQLLWVVLWANLMAMLI, IIAIATDLAEFIGAAVGFQLV, FGISLMEGAMITAVATVMILI, VVIGSLLMLVAVIYIAELFFA, AAGILGATVMPHVIYLHSALF, IAMVIAGFVNIAIVAMAAAVF, VLFGVSLIASGLSSTVVGTMA, FITMAPSFVVIGLGMNTTDIL, VMSQVVLSFGIALAIIPLLIF, and YAGVVIVSLVLSLNAYLMVTL.

Belongs to the NRAMP family.

It localises to the cell inner membrane. Its function is as follows. H(+)-stimulated, divalent metal cation uptake system. In Vibrio campbellii (strain ATCC BAA-1116), this protein is Divalent metal cation transporter MntH.